The following is a 316-amino-acid chain: Mycothiol acetyltransferase (316 aa).

2 N-acetyltransferase domains span residues 16-153 (REVR…VPAV) and 156-316 (VRIR…PAAN). Glu-36 contacts 1D-myo-inositol 2-(L-cysteinylamino)-2-deoxy-alpha-D-glucopyranoside. Residues 83–85 (LVV) and 91–96 (RRGIGS) contribute to the acetyl-CoA site. 1D-myo-inositol 2-(L-cysteinylamino)-2-deoxy-alpha-D-glucopyranoside is bound by residues Glu-183, Lys-228, and Glu-238. Residues 242–244 (VGV) and 249–255 (QGRGLGQ) each bind acetyl-CoA. Tyr-283 contributes to the 1D-myo-inositol 2-(L-cysteinylamino)-2-deoxy-alpha-D-glucopyranoside binding site. 288 to 293 (NVAAVR) contacts acetyl-CoA.

Belongs to the acetyltransferase family. MshD subfamily. Monomer.

The enzyme catalyses 1D-myo-inositol 2-(L-cysteinylamino)-2-deoxy-alpha-D-glucopyranoside + acetyl-CoA = mycothiol + CoA + H(+). Its function is as follows. Catalyzes the transfer of acetyl from acetyl-CoA to desacetylmycothiol (Cys-GlcN-Ins) to form mycothiol. This is Mycothiol acetyltransferase from Mycolicibacterium paratuberculosis (strain ATCC BAA-968 / K-10) (Mycobacterium paratuberculosis).